A 346-amino-acid polypeptide reads, in one-letter code: MRLVHLDLKGAPPKVCYLSEIFPLFRALGANGILIEYEDMFPYEGHLRLLRAKHAYSPSEIKEILHLATLNELEVIPLVQTFGHMEFVLKHEALAHLREVARFPNTLNPHKEESLALVTAMIDQVMELHPGARWFHVGCDEVYYLGEGETSRQWLQQEPNSKAKLCLSHMEAVASHMRARYPTTTPLMWDDMLRDIPEDQLSGSRVPQLVEPVLWDYGADLDLHGKALLVEKYRKSGFSWLWAASAFKGATGVNQSLTPIEHHLRNHLQWLQVAGSVPADTLRGIILTGWQRYDHFSVLCELLPVGIPSLAVCLQALLHGDFAENVKARVENFLGISSLEEMSFRR.

The active-site Proton donor is Glu-141.

It belongs to the glycosyl hydrolase 20 family. As to quaternary structure, homodimer; disulfide-linked.

Its subcellular location is the cytoplasm. The protein resides in the nucleus. It is found in the extracellular vesicle. It carries out the reaction Hydrolysis of terminal non-reducing N-acetyl-D-hexosamine residues in N-acetyl-beta-D-hexosaminides.. With respect to regulation, inhibited by O-(2-acetamido-2-deoxy-D-glucopyranosylidene)amino N-phenylcarbamate (PUGNAc). Inhibited by galacto-NAG-thiazoline. Its function is as follows. Has hexosaminidase activity. Responsible for the cleavage of the monosaccharides N-acetylglucosamine (GlcNAc) and N-acetylgalactosamine (GalNAc) from cellular substrates. Has a preference for galactosaminide over glucosaminide substrates. The chain is Hexosaminidase D from Bos taurus (Bovine).